Reading from the N-terminus, the 229-residue chain is Ribonuclease 3 (229 aa).

The 123-residue stretch at 5–127 folds into the RNase III domain; sequence LDRLERKLGY…LIGAIYLDTG (123 aa). Position 40 (glutamate 40) interacts with Mg(2+). The active site involves aspartate 44. Residues aspartate 113 and glutamate 116 each coordinate Mg(2+). Residue glutamate 116 is part of the active site. The 71-residue stretch at 154–224 folds into the DRBM domain; sequence DPKTRLQEFL…AAAALVALGV (71 aa).

This sequence belongs to the ribonuclease III family. As to quaternary structure, homodimer. The cofactor is Mg(2+).

It is found in the cytoplasm. The catalysed reaction is Endonucleolytic cleavage to 5'-phosphomonoester.. Its function is as follows. Digests double-stranded RNA. Involved in the processing of primary rRNA transcript to yield the immediate precursors to the large and small rRNAs (23S and 16S). Processes some mRNAs, and tRNAs when they are encoded in the rRNA operon. Processes pre-crRNA and tracrRNA of type II CRISPR loci if present in the organism. This is Ribonuclease 3 from Pseudomonas paraeruginosa (strain DSM 24068 / PA7) (Pseudomonas aeruginosa (strain PA7)).